Here is a 267-residue protein sequence, read N- to C-terminus: tRNA pseudouridine synthase A (267 aa).

The active-site Nucleophile is the aspartate 52. Tyrosine 110 contributes to the substrate binding site.

It belongs to the tRNA pseudouridine synthase TruA family. In terms of assembly, homodimer.

It catalyses the reaction uridine(38/39/40) in tRNA = pseudouridine(38/39/40) in tRNA. Its function is as follows. Formation of pseudouridine at positions 38, 39 and 40 in the anticodon stem and loop of transfer RNAs. The chain is tRNA pseudouridine synthase A from Paraburkholderia phymatum (strain DSM 17167 / CIP 108236 / LMG 21445 / STM815) (Burkholderia phymatum).